Here is a 369-residue protein sequence, read N- to C-terminus: Gibberellin 3-beta-dioxygenase 2-3 (369 aa).

The 102-residue stretch at 205 to 306 (MTATMHLNWY…RISLGYFLGP (102 aa)) folds into the Fe2OG dioxygenase domain. Fe cation contacts are provided by His-229, Asp-231, and His-287. Arg-297 is an active-site residue.

It belongs to the iron/ascorbate-dependent oxidoreductase family. GA3OX subfamily. L-ascorbate serves as cofactor. Requires Fe cation as cofactor.

The catalysed reaction is gibberellin A20 + 2-oxoglutarate + O2 = gibberellin A1 + succinate + CO2. Its function is as follows. Converts the inactive gibberellin precursors GA9 and GA20 in the bioactives gibberellins GA4 and GA1. The protein is Gibberellin 3-beta-dioxygenase 2-3 (GA3ox2-3) of Triticum aestivum (Wheat).